The chain runs to 130 residues: Small ribosomal subunit protein uS11 (130 aa).

Belongs to the universal ribosomal protein uS11 family. As to quaternary structure, part of the 30S ribosomal subunit. Interacts with proteins S7 and S18. Binds to IF-3.

Its function is as follows. Located on the platform of the 30S subunit, it bridges several disparate RNA helices of the 16S rRNA. Forms part of the Shine-Dalgarno cleft in the 70S ribosome. The polypeptide is Small ribosomal subunit protein uS11 (Caldanaerobacter subterraneus subsp. tengcongensis (strain DSM 15242 / JCM 11007 / NBRC 100824 / MB4) (Thermoanaerobacter tengcongensis)).